The primary structure comprises 114 residues: UPF0757 protein YmgG (114 aa).

The protein belongs to the UPF0757 family.

This chain is UPF0757 protein YmgG, found in Edwardsiella ictaluri (strain 93-146).